The following is a 656-amino-acid chain: Ankyrin repeat and SAM domain-containing protein 3 (656 aa).

The interval 1–422 (MSELSDEASE…AESSPQTQRA (422 aa)) is interaction with NEK7. Residues S2 and S5 each carry the phosphoserine modification. ANK repeat units follow at residues 34-64 (DVPL…DLNK), 68-97 (GGWT…SVNV), 101-130 (EGQT…ELEM), 134-163 (QGWT…NANV), 168-197 (CGFT…KVDA), and 201-220 (SGAT…IVAL). 3-hydroxyasparagine is present on N96. A phosphoserine mark is found at S201, S225, S243, S244, and S245. 2 disordered regions span residues 235-265 (SPEK…GVSI) and 277-312 (GIGL…EEEG). A Phosphothreonine modification is found at T319. S320, S368, S371, and S375 each carry phosphoserine. Positions 346-425 (GPVQSSSSSE…SPQTQRAPYS (80 aa)) are disordered. The 64-residue stretch at 425–488 (SGPQDLAALL…TSAIARWHSS (64 aa)) folds into the SAM domain. Residues 501–526 (ADRLEAEMQELAIQLHKRCEEVEATR) adopt a coiled-coil conformation. Residue S541 is modified to Phosphoserine.

Homooligomer. Interacts (via SAM domain) with ANKS6 (via SAM domain). Interacts with BICC1. Interacts with NPHP1. Interacts with NEK8. Interacts with HIF1AN. Interacts with NEK7; this interaction alters the subcellular distribution of NEK7 by preventing its nuclear translocation. Hydroxylated at Asn-96, most probably by HIF1AN. Post-translationally, phosphorylations at Ser-5, Ser-225, Thr-319, Ser-320, Ser-368 and Ser-371 occur in a NEK7-dependent manner. In terms of processing, polyubiquitinated.

It localises to the cell projection. The protein resides in the cilium. It is found in the cytoplasm. May be involved in vasopressin signaling in the kidney. The protein is Ankyrin repeat and SAM domain-containing protein 3 (ANKS3) of Homo sapiens (Human).